The primary structure comprises 73 residues: Photosystem I reaction center subunit IV (73 aa).

The protein belongs to the PsaE family.

The protein resides in the cellular thylakoid membrane. In terms of biological role, stabilizes the interaction between PsaC and the PSI core, assists the docking of the ferredoxin to PSI and interacts with ferredoxin-NADP oxidoreductase. This chain is Photosystem I reaction center subunit IV, found in Synechococcus sp. (strain JA-3-3Ab) (Cyanobacteria bacterium Yellowstone A-Prime).